A 988-amino-acid polypeptide reads, in one-letter code: Chloride channel protein 1 (988 aa).

At 1-118 (MEQSRSQQRG…VVRRKLGEDG (118 aa)) the chain is on the cytoplasmic side. The segment covering 65–75 (HKEQFSDREQD) has biased composition (basic and acidic residues). Positions 65 to 92 (HKEQFSDREQDIGMPKKTGSSSTVDSKD) are disordered. Residues 119-150 (IFLVLLGLLMALVSWSMDYVSAKSLQAYKWSY) traverse the membrane as a helical segment. Residues 151-158 (AQMQPSLP) are Extracellular-facing. The chain crosses the membrane as a helical span at residues 159-179 (LQFLVWVTFPLVLILFSALFC). The Cytoplasmic portion of the chain corresponds to 180–183 (HLIS). Residues 184 to 189 (PQAVGS) constitute an intramembrane region (note=Loop between two helices). The short motif at 188-192 (GSGIP) is the Selectivity filter part_1 element. Residue Ser189 coordinates chloride. Residues 190–195 (GIPEMK) constitute an intramembrane region (helical). The Cytoplasmic segment spans residues 196-208 (TILRGVVLKEYLT). The helical intramembrane region spans 209 to 224 (MKAFVAKVVALTAGLG). An intramembrane region (note=Loop between two helices) is located at residues 225–230 (SGIPVG). A Selectivity filter part_2 motif is present at residues 230 to 234 (GKEGP). The segment at residues 231–246 (KEGPFVHIASICAAVL) is an intramembrane region (helical). Residues 247–268 (SKFMSVFCGVYEQPYYYSDILT) lie on the Cytoplasmic side of the membrane. 2 consecutive intramembrane regions (helical) follow at residues 269 to 280 (VGCAVGVGCCFG) and 281 to 290 (TPLGGVLFSI). Over 291–301 (EVTSTYFAVRN) the chain is Cytoplasmic. Residues 302–321 (YWRGFFAATFSAFVFRVLAV) traverse the membrane as a helical segment. Topologically, residues 322-347 (WNKDAVTITALFRTNFRMDFPFDLKE) are extracellular. The chain crosses the membrane as a helical span at residues 348–376 (LPAFAAIGICCGLLGAVFVYLHRQVMLGV). Topologically, residues 377–390 (RKHKALSQFLAKHR) are cytoplasmic. The chain crosses the membrane as a helical span at residues 391 to 408 (LLYPGIVTFVIASFTFPP). At 409-414 (GMGQFM) the chain is on the extracellular side. An intramembrane region (note=Loop between two helices) is located at residues 415-418 (AGEL). The segment at residues 419–426 (MPREAIST) is an intramembrane region (helical). The Extracellular segment spans residues 427–457 (LFDNNTWVKHAGDPESLGQSAVWIHPRVNVV). Positions 458 to 475 (IIIFLFFVMKFWMSIVAT) form an intramembrane region, helical. The segment at residues 476–482 (TMPIPCG) is an intramembrane region (note=Loop between two helices). The short motif at 482–486 (GGFMP) is the Selectivity filter part_3 element. Residues 483–498 (GFMPVFVLGAAFGRLV) constitute an intramembrane region (helical). Phe484 contributes to the chloride binding site. Over 499–521 (GEIMAMLFPDGILFDDIIYKILP) the chain is Extracellular. The helical intramembrane region spans 522-538 (GGYAVIGAAALTGAVSH). Positions 539-540 (TV) form an intramembrane region, note=Loop between two helices. An intramembrane region (helical) is located at residues 541 to 554 (STAVICFELTGQIA). Over 555–557 (HIL) the chain is Extracellular. Positions 558–571 (PMMVAVILANMVAQ) form an intramembrane region, helical. The note=Loop between two helices intramembrane region spans 572–575 (SLQP). Positions 576-578 (SLY) form an intramembrane region, helical. Position 578 (Tyr578) interacts with chloride. Residues 579–988 (DSIIQVKKLP…DEEDEDELIL (410 aa)) lie on the Cytoplasmic side of the membrane. Residues 609-668 (MVRDVKFVSASYTYGELRTLLQTTTVKTLPLVDSKDSMILLGSVERSELQALLQRHLCPE) enclose the CBS 1 domain. The disordered stretch occupies residues 713 to 764 (EDEDEDLSGKSELPPSLALHPSTTAPLSPEEPNGPLPGHKQQPEAPEPAGQR). The CBS 2 domain maps to 821–876 (IDQSPFQLVEQTTLHKTHTLFSLLGLHLAYVTSMGKLRGVLALEELQKAIEGHTKS). The disordered stretch occupies residues 880 to 988 (LRPPLASFRN…DEEDEDELIL (109 aa)). The residue at position 886 (Ser886) is a Phosphoserine. A compositionally biased stretch (polar residues) spans 887 to 906 (FRNTTSTRKSTGAPPSSAEN). Positions 929 to 941 (TPVPSPSPEPPLS) are enriched in pro residues. Composition is skewed to acidic residues over residues 950-967 (ELEELELVESPGLEEELA) and 979-988 (DEEDEDELIL).

This sequence belongs to the chloride channel (TC 2.A.49) family. ClC-1/CLCN1 subfamily. As to quaternary structure, homodimer. In terms of tissue distribution, predominantly expressed in skeletal muscles.

The protein localises to the cell membrane. Its subcellular location is the sarcolemma. The protein resides in the T-tubule. The catalysed reaction is chloride(in) = chloride(out). It catalyses the reaction thiocyanate(in) = thiocyanate(out). The enzyme catalyses bromide(in) = bromide(out). It carries out the reaction nitrate(in) = nitrate(out). The catalysed reaction is iodide(out) = iodide(in). Its activity is regulated as follows. Modulated by membrane voltage with depolarization favouring channel opening and hyperpolarization favouring channel closure. Inhibited by acidic pH and ATP binding due to a shift of voltage dependence of common gating to more positive voltages. Inhibited by 9-anthracene-carboxylic. Functionally, voltage-gated chloride channel involved in skeletal muscle excitability. Generates most of the plasma membrane chloride conductance in skeletal muscle fibers, stabilizes the resting membrane potential and contributes to the repolarization phase during action potential firing. Forms a homodimeric channel where each subunit has its own ion conduction pathway. Conducts double-barreled currents controlled by two types of gates, two fast glutamate gates that control each subunit independently and a slow common gate that opens and shuts off both subunits simultaneously. Has a significant open probability at muscle resting potential and is further activated upon membrane depolarization. Permeable to small monovalent anions with ion selectivity for chloride &gt; thiocyanate &gt; bromide &gt; nitrate &gt; iodide. This chain is Chloride channel protein 1, found in Homo sapiens (Human).